A 478-amino-acid polypeptide reads, in one-letter code: tRNA-2-methylthio-N(6)-dimethylallyladenosine synthase (478 aa).

One can recognise an MTTase N-terminal domain in the interval 39–157 (KLVFTQTFGC…FPQLLTESIN (119 aa)). Positions 48, 84, 118, 194, 198, and 201 each coordinate [4Fe-4S] cluster. Residues 180–410 (RKFELKAFVN…LEAVNRISAE (231 aa)) enclose the Radical SAM core domain. The 68-residue stretch at 410–477 (EINDGYKDRI…TFSLNGILVN (68 aa)) folds into the TRAM domain.

It belongs to the methylthiotransferase family. MiaB subfamily. In terms of assembly, monomer. The cofactor is [4Fe-4S] cluster.

Its subcellular location is the cytoplasm. It catalyses the reaction N(6)-dimethylallyladenosine(37) in tRNA + (sulfur carrier)-SH + AH2 + 2 S-adenosyl-L-methionine = 2-methylsulfanyl-N(6)-dimethylallyladenosine(37) in tRNA + (sulfur carrier)-H + 5'-deoxyadenosine + L-methionine + A + S-adenosyl-L-homocysteine + 2 H(+). In terms of biological role, catalyzes the methylthiolation of N6-(dimethylallyl)adenosine (i(6)A), leading to the formation of 2-methylthio-N6-(dimethylallyl)adenosine (ms(2)i(6)A) at position 37 in tRNAs that read codons beginning with uridine. The polypeptide is tRNA-2-methylthio-N(6)-dimethylallyladenosine synthase (Clostridioides difficile (strain 630) (Peptoclostridium difficile)).